The chain runs to 180 residues: O-acetyl-ADP-ribose deacetylase (180 aa).

The Macro domain occupies 1 to 175 (MKPQIDVIHG…LYQRLLTQRG (175 aa)). Residues 11-12 (DI), Asn25, 33-35 (GVD), and 122-126 (STGVY) each bind substrate. The active-site Proton acceptor is Asp35.

It belongs to the MacroD-type family. YmdB subfamily. As to quaternary structure, homodimer. Interacts with RNase III.

The catalysed reaction is 3''-O-acetyl-ADP-D-ribose + H2O = ADP-D-ribose + acetate + H(+). The enzyme catalyses 2''-O-acetyl-ADP-D-ribose + H2O = ADP-D-ribose + acetate + H(+). Deacetylates O-acetyl-ADP ribose to yield ADP-ribose and free acetate. Down-regulates ribonuclease 3 (RNase III) activity. Acts by interacting directly with the region of the ribonuclease that is required for dimerization/activation. The sequence is that of O-acetyl-ADP-ribose deacetylase from Enterobacter cloacae subsp. cloacae (strain ATCC 13047 / DSM 30054 / NBRC 13535 / NCTC 10005 / WDCM 00083 / NCDC 279-56).